The primary structure comprises 246 residues: Small ribosomal subunit protein uS2 (246 aa).

Belongs to the universal ribosomal protein uS2 family.

This is Small ribosomal subunit protein uS2 from Stutzerimonas stutzeri (strain A1501) (Pseudomonas stutzeri).